Reading from the N-terminus, the 1367-residue chain is MKRIRDDIYATGSQFKRPLGSSRGESYEQSPITGGGSIGEGGINTQKLTTDDALTYLKEVKEMFQDQRDKYDMFLEVMKDFKAQKTDTSGVISRVKELFKGHNNLIFGFNTFLPKGFEITLDDVEAPSKKTVEFEEAISFVNKIKTRFQHNELVYKSFLEILNMYRKDNKDITEVYNEVSTLFEDHSDLLEEFTRFLPDSLAPHTEAQLLRSQAQRYDDRGSGPPLVRRMFMEKDRRRERTVASRGDRDHSVDRSDLNDDKSMVKMHRDQRKRVDKDNRERRSRDLEDGEAEQDNLQHFSEKRKSSRRMEGFEAYSGPASHSEKNNLKSMYNQAFLFCEKVKERLCSQDDYQAFLKCLNMFSNGIIQRKDLQNLVSDVLGKFPDLMDEFNQFFERCESIDGFQHLAGVMSKKSLGSEENLSRSVKGEEKDREHKRDVEAAKEKERSKDKYMGKSIQELDLSDCERCTPSYRLLPPDYPIPSVRHRQKSGAAVLNDHWVSVTSGSEDYSFKHMRRNQYEESLFRCEDDRFELDMLLESVGSAAKSAEELLNIIIDKKISFEGSFRIEDHFTALNLRCIERLYGDHGLDVTDLIRKNPAAALPVILTRLKQKQDEWTKCREGFNVVWADVYAKNHYKSLDHRSFYFKQQDSKNLSAKALVSEVKDLKEKSQKEDDVVLSISAGYRQPIIPHLEYDYLDRAIHEDLFKLVQFSCEEICSTKEQTGKVLKLWANFLELMLDVAPRAKGSDSVEDVVETQHQRAFTSGEANESSDAISLVSRQLKFATNGDVHASSGVSKHGETGLLNRDSSGKENLKDGDLANKDVATCAEKPQKDQEIGNGAAKRSGDVDERVATSSSSFPSGVENNNGKVGSRDSSGSRGILSKPSEAIDKVDSIQHTQGVDIGRIIVLGNGLQSDTSKANSNYDESGGPSKIEKEEGELSPVGDSEDNFVVYEDRELKATAKTEHSVEAEGENDEDADDEDGDDASEAGEDASGTESIGDECSQDDNGVEEEGEHDEIDGKAESEGEAEGMESHLIEDKGLFPSSERVLLSVKPLSKHIAAAALVDEKKKDSRVFYGNDDFYVLFRLHRVSAIDSYDLLSHILYERILSAKTYCSGSEMKLRNTKDTCSPDPYARFMNALFSLLNGSAENSKFEDECRAIIGNQSYVLFTLEKLIYKLVKQLQAVVADDMDNKLLQLYEYENSRRPGRVFDSVYYENARILLHEENIYRLECSSSPSRLSIQLMDNIIEKPDAYAVSMEPTFTSYLQNEFLSNSSGKKELQDIVLQRNMRGYNGLDDLAVACKAMEGVQVINGLECKMSCSSYKISYVLDTEDFFHRKKKQKKSNNLSLAKLSQNRIARFHKFLSASR.

Positions 14 to 44 (QFKRPLGSSRGESYEQSPITGGGSIGEGGIN) are disordered. Residues 33-42 (TGGGSIGEGG) are compositionally biased toward gly residues. PAH domains follow at residues 46–116 (QKLT…LPKG) and 130–200 (KTVE…LPDS). The segment at 212–322 (SQAQRYDDRG…EAYSGPASHS (111 aa)) is disordered. Composition is skewed to basic and acidic residues over residues 230–286 (MFME…SRDL) and 299–311 (FSEKRKSSRRMEG). In terms of domain architecture, PAH 3 spans 327-396 (LKSMYNQAFL…DEFNQFFERC (70 aa)). 4 disordered regions span residues 417–446 (EENLSRSVKGEEKDREHKRDVEAAKEKERS), 786–883 (DVHA…LSKP), 912–946 (QSDTSKANSNYDESGGPSKIEKEEGELSPVGDSED), and 958–1031 (ATAK…EGME). Composition is skewed to basic and acidic residues over residues 424-446 (VKGEEKDREHKRDVEAAKEKERS) and 806-819 (SSGKENLKDGDLAN). Polar residues-rich tracts occupy residues 851 to 876 (ATSSSSFPSGVENNNGKVGSRDSSGS) and 912 to 923 (QSDTSKANSNYD). The span at 958-967 (ATAKTEHSVE) shows a compositional bias: basic and acidic residues. Acidic residues-rich tracts occupy residues 968–989 (AEGENDEDADDEDGDDASEAGE) and 997–1016 (IGDECSQDDNGVEEEGEHDE). Phosphoserine is present on Ser1023.

It is found in the nucleus. Its function is as follows. Acts as a transcriptional repressor. Plays roles in regulating gene expression and genome stability. This Arabidopsis thaliana (Mouse-ear cress) protein is Paired amphipathic helix protein Sin3-like 2 (SNL2).